The following is a 137-amino-acid chain: Putative transcriptional regulatory protein MJ0173 (137 aa).

Belongs to the Tfx family.

Its function is as follows. Putative transcriptional regulator. The sequence is that of Putative transcriptional regulatory protein MJ0173 from Methanocaldococcus jannaschii (strain ATCC 43067 / DSM 2661 / JAL-1 / JCM 10045 / NBRC 100440) (Methanococcus jannaschii).